The chain runs to 290 residues: 4-diphosphocytidyl-2-C-methyl-D-erythritol kinase (290 aa).

K8 is an active-site residue. Residue 89–99 (PIGAGVGGGSS) coordinates ATP. The active site involves D131.

The protein belongs to the GHMP kinase family. IspE subfamily.

It catalyses the reaction 4-CDP-2-C-methyl-D-erythritol + ATP = 4-CDP-2-C-methyl-D-erythritol 2-phosphate + ADP + H(+). Its pathway is isoprenoid biosynthesis; isopentenyl diphosphate biosynthesis via DXP pathway; isopentenyl diphosphate from 1-deoxy-D-xylulose 5-phosphate: step 3/6. Its function is as follows. Catalyzes the phosphorylation of the position 2 hydroxy group of 4-diphosphocytidyl-2C-methyl-D-erythritol. The chain is 4-diphosphocytidyl-2-C-methyl-D-erythritol kinase from Chlamydia felis (strain Fe/C-56) (Chlamydophila felis).